Here is a 730-residue protein sequence, read N- to C-terminus: LisH domain-containing protein ARMC9 (730 aa).

Residues 7–39 (HESELLGLVKEYLDFAEFEDTLKTFSKECKVKG) form the LisH domain. Residues 205 to 242 (SNNKEMLQQLHQQLLEAERRAMAYLKRYNKMQADYHSL) adopt a coiled-coil conformation. Phosphoserine is present on serine 583. Positions 675–730 (QNAQQARNGCPRPIPVAQPDDYKEGKRGVAGRATPSSCKSAECAEPVLSSGAQKPK) are disordered.

In terms of assembly, interacts with TOGARAM1, CCDC66, CEP104, CSPP1 and CEP290. Interacts with NDUFAF2.

The protein localises to the cytoplasm. It is found in the cytoskeleton. Its subcellular location is the cilium basal body. It localises to the cell projection. The protein resides in the cilium. The protein localises to the microtubule organizing center. It is found in the centrosome. Its subcellular location is the centriole. Its function is as follows. Involved in ciliogenesis. It is required for appropriate acetylation and polyglutamylation of ciliary microtubules, and regulation of cilium length. Acts as a positive regulator of hedgehog (Hh)signaling. May participate in the trafficking and/or retention of GLI2 and GLI3 proteins at the ciliary tip. This chain is LisH domain-containing protein ARMC9 (Armc9), found in Rattus norvegicus (Rat).